The chain runs to 661 residues: Arginine--tRNA ligase, cytoplasmic (661 aa).

The interval 1 to 72 (MEARVAEAAA…QEEQSKTVKS (72 aa)) is could be involved in the assembly of the multisynthetase complex. L-arginine-binding positions include 201–203 (SPN), H212, Y385, D389, and Q413. The short motif at 202–213 (PNIAKEMHVGHL) is the 'HIGH' region element. The interaction with tRNA stretch occupies residues 530–544 (NTAAYLLYAFTRIRA).

Belongs to the class-I aminoacyl-tRNA synthetase family. In terms of assembly, monomer; also part of a multisubunit complex that groups tRNA ligases for Arg, Asp, Glu, Gln, Ile, Leu, Lys, Met and Pro.

The protein localises to the cytoplasm. Its subcellular location is the cytosol. It catalyses the reaction tRNA(Arg) + L-arginine + ATP = L-arginyl-tRNA(Arg) + AMP + diphosphate. In terms of biological role, forms part of a macromolecular complex that catalyzes the attachment of specific amino acids to cognate tRNAs during protein synthesis. The protein is Arginine--tRNA ligase, cytoplasmic (RARS1) of Gallus gallus (Chicken).